The primary structure comprises 195 residues: Molybdenum cofactor guanylyltransferase (195 aa).

GTP contacts are provided by residues 12–14 (LAG), K25, N53, D70, and D100. Residue D100 participates in Mg(2+) binding.

The protein belongs to the MobA family. Monomer. Mg(2+) is required as a cofactor.

It is found in the cytoplasm. It catalyses the reaction Mo-molybdopterin + GTP + H(+) = Mo-molybdopterin guanine dinucleotide + diphosphate. In terms of biological role, transfers a GMP moiety from GTP to Mo-molybdopterin (Mo-MPT) cofactor (Moco or molybdenum cofactor) to form Mo-molybdopterin guanine dinucleotide (Mo-MGD) cofactor. This chain is Molybdenum cofactor guanylyltransferase, found in Vibrio vulnificus (strain YJ016).